The following is a 331-amino-acid chain: Activator of 90 kDa heat shock protein ATPase homolog 2 (331 aa).

Belongs to the AHA1 family.

Co-chaperone that stimulates HSP90 ATPase activity. The protein is Activator of 90 kDa heat shock protein ATPase homolog 2 (Ahsa2) of Mus musculus (Mouse).